Here is a 134-residue protein sequence, read N- to C-terminus: Large ribosomal subunit protein uL16c (134 aa).

Positions 1 to 21 are disordered; it reads MLSPKRTKYRKHHRGRMRGKA.

It belongs to the universal ribosomal protein uL16 family. Part of the 50S ribosomal subunit.

It is found in the plastid. It localises to the chloroplast. This Chlorella vulgaris (Green alga) protein is Large ribosomal subunit protein uL16c.